The chain runs to 843 residues: Molybdenum cofactor sulfurase (843 aa).

K241 is subject to N6-(pyridoxal phosphate)lysine. Residue C405 is part of the active site. Positions 657–836 constitute an MOSC domain; it reads QYLRKFVMPG…LMVGDIVIPS (180 aa).

It belongs to the class-V pyridoxal-phosphate-dependent aminotransferase family. MOCOS subfamily. The cofactor is pyridoxal 5'-phosphate.

It catalyses the reaction Mo-molybdopterin + L-cysteine + AH2 = thio-Mo-molybdopterin + L-alanine + A + H2O. Functionally, sulfurates the molybdenum cofactor. Sulfation of molybdenum is essential for xanthine dehydrogenase (XDH) and aldehyde oxidase (ADO) enzymes in which molybdenum cofactor is liganded by 1 oxygen and 1 sulfur atom in active form. This chain is Molybdenum cofactor sulfurase, found in Aspergillus fumigatus (strain CBS 144.89 / FGSC A1163 / CEA10) (Neosartorya fumigata).